The chain runs to 331 residues: Phospholipase A2 inhibitor (331 aa).

An N-terminal signal peptide occupies residues 1 to 23 (MKSSVPSLLIACLVMSLNSYTQQ). Residue N35 is glycosylated (N-linked (GlcNAc...) asparagine). LRR repeat units follow at residues 78–101 (LPNL…LFRN), 103–125 (PQLH…IFTN), 127–149 (SSLI…WFQT), 150–173 (LGEL…CFDK), 175–197 (KKLT…MFSG), 199–221 (DNLE…TFHW), 223–244 (PKLT…FFQP), and 245–268 (LEQL…VYKT). The N-linked (GlcNAc...) asparagine glycan is linked to N125. N-linked (GlcNAc...) asparagine glycosylation is present at N232. The N-linked (GlcNAc...) asparagine glycan is linked to N271. In terms of domain architecture, LRRCT spans 279–330 (NPWACDCRLDNLLTWVNEHNIHLYSKEEIVCASPKHFKGECATSLHKSQICP).

In terms of assembly, homotrimer.

It is found in the secreted. Functionally, inhibits the enzymatic activity of the basic phospholipase A2 (PLA2). In Gloydius brevicaudus siniticus (Chinese mamushi), this protein is Phospholipase A2 inhibitor.